The sequence spans 879 residues: Protein P (879 aa).

The tract at residues 1–184 (MHPFSRLFRN…GKPYSWEHRQ (184 aa)) is terminal protein domain (TP). Residues 185 to 382 (LVQHNGQQHK…YCIHHIVSSI (198 aa)) form a spacer region. Residues 304–345 (SASNSNKSRSREKAYSSNSTSKRYSPPLNYEKSDFSSPGVRG) form a disordered region. A polymerase/reverse transcriptase domain (RT) region spans residues 383-724 (DDWGPCTVTG…YEELWPVVRQ (342 aa)). One can recognise a Reverse transcriptase domain in the interval 393–634 (DVTIKSPRTP…NHLHFMGYVI (242 aa)). 3 residues coordinate Mg(2+): Asp-465, Asp-585, and Asp-586.

The protein belongs to the hepadnaviridae P protein family.

The enzyme catalyses DNA(n) + a 2'-deoxyribonucleoside 5'-triphosphate = DNA(n+1) + diphosphate. It catalyses the reaction Endonucleolytic cleavage to 5'-phosphomonoester.. Activated by host HSP70 and HSP40 in vitro to be able to bind the epsilon loop of the pgRNA. Because deletion of the RNase H region renders the protein partly chaperone-independent, the chaperones may be needed indirectly to relieve occlusion of the RNA-binding site by this domain. Inhibited by several reverse-transcriptase inhibitors: Lamivudine, Adefovir and Entecavir. In terms of biological role, multifunctional enzyme that converts the viral RNA genome into dsDNA in viral cytoplasmic capsids. This enzyme displays a DNA polymerase activity that can copy either DNA or RNA templates, and a ribonuclease H (RNase H) activity that cleaves the RNA strand of RNA-DNA heteroduplexes in a partially processive 3'- to 5'-endonucleasic mode. Neo-synthesized pregenomic RNA (pgRNA) are encapsidated together with the P protein, and reverse-transcribed inside the nucleocapsid. Initiation of reverse-transcription occurs first by binding the epsilon loop on the pgRNA genome, and is initiated by protein priming, thereby the 5'-end of (-)DNA is covalently linked to P protein. Partial (+)DNA is synthesized from the (-)DNA template and generates the relaxed circular DNA (RC-DNA) genome. After budding and infection, the RC-DNA migrates in the nucleus, and is converted into a plasmid-like covalently closed circular DNA (cccDNA). The activity of P protein does not seem to be necessary for cccDNA generation, and is presumably released from (+)DNA by host nuclear DNA repair machinery. The polypeptide is Protein P (Woodchuck hepatitis B virus (isolate 1) (WHV)).